A 121-amino-acid chain; its full sequence is Ribonuclease P protein component (121 aa).

Belongs to the RnpA family. In terms of assembly, consists of a catalytic RNA component (M1 or rnpB) and a protein subunit.

It carries out the reaction Endonucleolytic cleavage of RNA, removing 5'-extranucleotides from tRNA precursor.. In terms of biological role, RNaseP catalyzes the removal of the 5'-leader sequence from pre-tRNA to produce the mature 5'-terminus. It can also cleave other RNA substrates such as 4.5S RNA. The protein component plays an auxiliary but essential role in vivo by binding to the 5'-leader sequence and broadening the substrate specificity of the ribozyme. The polypeptide is Ribonuclease P protein component (Nitrosomonas eutropha (strain DSM 101675 / C91 / Nm57)).